A 1004-amino-acid chain; its full sequence is Outer cell wall protein (1004 aa).

The first 24 residues, 1–24 (MNKKVVLSVLSTTLVASVAASAFA), serve as a signal peptide directing secretion.

The outer cell wall layer is composed of subunits of the outer cell wall protein. These proteins form a hexagonal array with a lattice constant of 14.5 nm in the outer cell wall layers.

The protein localises to the secreted. It is found in the cell wall. It localises to the S-layer. In terms of biological role, the outer wall protein binds to the middle cell wall protein. The sequence is that of Outer cell wall protein from Brevibacillus brevis (strain 47 / JCM 6285 / NBRC 100599).